Reading from the N-terminus, the 641-residue chain is DEAD-box ATP-dependent RNA helicase 50 (641 aa).

Disordered regions lie at residues 86–115, 129–189, and 197–216; these read SMPS…IGNF, RSAH…LNSV, and DDLD…WGNI. The span at 150–159 shows a compositional bias: acidic residues; the sequence is PSDESDEDGT. The Q motif signature appears at 240–268; the sequence is RSFKEIGCSDEILGALRSFGFPRPSHIQA. The Helicase ATP-binding domain maps to 271–452; sequence YRPVLEGKSC…VETFPDCELI (182 aa). Position 284–291 (284–291) interacts with ATP; the sequence is DQSGSGKT. Residues 399–402 carry the DEAD box motif; sequence DEVD. A Helicase C-terminal domain is found at 487-641; the sequence is NKKSALVKII…GHPLHDVPCV (155 aa).

It belongs to the DEAD box helicase family.

It catalyses the reaction ATP + H2O = ADP + phosphate + H(+). Functionally, probably involved in resistance to biotic and abiotic stresses. Confers tolerance to oxidative stress and mediates pathogenesis-related (PR) genes expression. Exhibits RNA-dependent ATPase and ATP-dependent RNA helicase activities in vitro. This is DEAD-box ATP-dependent RNA helicase 50 from Oryza sativa subsp. japonica (Rice).